The following is a 236-amino-acid chain: ATP synthase subunit a (236 aa).

The next 5 membrane-spanning stretches (helical) occupy residues 17–37, 80–100, 114–134, 179–199, and 208–228; these read LANV…AVLA, MTLI…SVVI, VVTL…GIKL, ILLA…IAAI, and FSIF…MVYM.

This sequence belongs to the ATPase A chain family. In terms of assembly, F-type ATPases have 2 components, CF(1) - the catalytic core - and CF(0) - the membrane proton channel. CF(1) has five subunits: alpha(3), beta(3), gamma(1), delta(1), epsilon(1). CF(0) has three main subunits: a(1), b(2) and c(9-12). The alpha and beta chains form an alternating ring which encloses part of the gamma chain. CF(1) is attached to CF(0) by a central stalk formed by the gamma and epsilon chains, while a peripheral stalk is formed by the delta and b chains.

It is found in the cell membrane. Functionally, key component of the proton channel; it plays a direct role in the translocation of protons across the membrane. This Anoxybacillus flavithermus (strain DSM 21510 / WK1) protein is ATP synthase subunit a.